The chain runs to 279 residues: Ribosomal RNA small subunit methyltransferase A (279 aa).

His10, Leu12, Gly37, Glu58, Asp83, and Asn108 together coordinate S-adenosyl-L-methionine.

This sequence belongs to the class I-like SAM-binding methyltransferase superfamily. rRNA adenine N(6)-methyltransferase family. RsmA subfamily.

It is found in the cytoplasm. The catalysed reaction is adenosine(1518)/adenosine(1519) in 16S rRNA + 4 S-adenosyl-L-methionine = N(6)-dimethyladenosine(1518)/N(6)-dimethyladenosine(1519) in 16S rRNA + 4 S-adenosyl-L-homocysteine + 4 H(+). Specifically dimethylates two adjacent adenosines (A1518 and A1519) in the loop of a conserved hairpin near the 3'-end of 16S rRNA in the 30S particle. May play a critical role in biogenesis of 30S subunits. This is Ribosomal RNA small subunit methyltransferase A from Synechococcus elongatus (strain ATCC 33912 / PCC 7942 / FACHB-805) (Anacystis nidulans R2).